The chain runs to 284 residues: NAD kinase (284 aa).

Catalysis depends on Asp-60, which acts as the Proton acceptor. NAD(+)-binding positions include 60–61, 134–135, Lys-145, Arg-162, Asp-164, and Gln-235; these read DG and ND.

This sequence belongs to the NAD kinase family. It depends on a divalent metal cation as a cofactor.

The protein resides in the cytoplasm. The enzyme catalyses NAD(+) + ATP = ADP + NADP(+) + H(+). Functionally, involved in the regulation of the intracellular balance of NAD and NADP, and is a key enzyme in the biosynthesis of NADP. Catalyzes specifically the phosphorylation on 2'-hydroxyl of the adenosine moiety of NAD to yield NADP. The chain is NAD kinase from Treponema denticola (strain ATCC 35405 / DSM 14222 / CIP 103919 / JCM 8153 / KCTC 15104).